Consider the following 287-residue polypeptide: F420-non-reducing hydrogenase vhu subunit G (287 aa).

The protein belongs to the [NiFe]/[NiFeSe] hydrogenase small subunit family. As to quaternary structure, the F420-non-reducing hydrogenase vhu is composed of four subunits; VhuA, VhuD, VhuG and VhuU.

In Methanococcus voltae, this protein is F420-non-reducing hydrogenase vhu subunit G (vhuG).